The following is a 707-amino-acid chain: Protein kinase C theta type (707 aa).

The C2 domain occupies 1–107 (MSPFLRIGLS…KNNGRTEIWL (107 aa)). Residue tyrosine 90 is modified to Phosphotyrosine; by LCK. The segment at 159–209 (CHEFTATFFPQPTFCSVCHEFVWGLNKQGYQCRQCNAAIHKKCIDKVIAKC) adopts a Phorbol-ester/DAG-type 1 zinc-finger fold. Threonine 219 is subject to Phosphothreonine; by autocatalysis. The Phorbol-ester/DAG-type 2 zinc-finger motif lies at 231 to 281 (PHRFKVYNYKSPTFCEHCGTLLWGLARQGLKCDACGMNVHHRCQTKVANLC). The segment at 327 to 365 (ETRPPCVPTPGKREPQGISWDSPLDGSNKSAGPPEPEVS) is disordered. Position 348 is a phosphoserine (serine 348). Residues 380-634 (FILHKMLGKG…RGDIRQHPLF (255 aa)) enclose the Protein kinase domain. Residues 386–394 (LGKGSFGKV) and lysine 409 each bind ATP. Aspartate 504 acts as the Proton acceptor in catalysis. Residue threonine 538 is modified to Phosphothreonine; by PDPK1. Residues 635-706 (REINWEELER…INPGMETLIC (72 aa)) enclose the AGC-kinase C-terminal domain. Serine 676 carries the post-translational modification Phosphoserine; by autocatalysis. Serine 685 is subject to Phosphoserine. A Phosphoserine; by autocatalysis modification is found at serine 695.

This sequence belongs to the protein kinase superfamily. AGC Ser/Thr protein kinase family. PKC subfamily. Part of a membrane raft complex composed at least of BCL10, CARD11, MALT1 and IKBKB. Interacts with GLRX3 (via N-terminus). Interacts with ECT2. Interacts with CCDC88A/GIV; the interaction leads to phosphorylation of CCDC88A and inhibition of its guanine nucleotide exchange factor activity. Interacts with CD28. The cofactor is Mg(2+). In terms of processing, autophosphorylation at Thr-219 is required for targeting to the TCR and cellular function of PRKCQ upon antigen receptor ligation. Following TCR stimulation, phosphorylated at Tyr-90 and Ser-685. In terms of tissue distribution, T-lymphocytes and skeletal muscle.

The protein localises to the cytoplasm. It localises to the cell membrane. It catalyses the reaction L-seryl-[protein] + ATP = O-phospho-L-seryl-[protein] + ADP + H(+). The catalysed reaction is L-threonyl-[protein] + ATP = O-phospho-L-threonyl-[protein] + ADP + H(+). With respect to regulation, novel PKCs (PRKCD, PRKCE, PRKCH and PRKCQ) are calcium-insensitive, but activated by diacylglycerol (DAG) and phosphatidylserine. Three specific sites; Thr-538 (activation loop of the kinase domain), Ser-676 (turn motif) and Ser-695 (hydrophobic region), need to be phosphorylated for its full activation. Functionally, calcium-independent, phospholipid- and diacylglycerol (DAG)-dependent serine/threonine-protein kinase that mediates non-redundant functions in T-cell receptor (TCR) signaling, including T-cells activation, proliferation, differentiation and survival, by mediating activation of multiple transcription factors such as NF-kappa-B, JUN, NFATC1 and NFATC2. In TCR-CD3/CD28-co-stimulated T-cells, is required for the activation of NF-kappa-B and JUN, which in turn are essential for IL2 production, and participates in the calcium-dependent NFATC1 and NFATC2 transactivation. Mediates the activation of the canonical NF-kappa-B pathway (NFKB1) by direct phosphorylation of CARD11 on several serine residues, inducing CARD11 association with lipid rafts and recruitment of the BCL10-MALT1 complex, which then activates IKK complex, resulting in nuclear translocation and activation of NFKB1. May also play an indirect role in activation of the non-canonical NF-kappa-B (NFKB2) pathway. In the signaling pathway leading to JUN activation, acts by phosphorylating the mediator STK39/SPAK and may not act through MAP kinases signaling. Plays a critical role in TCR/CD28-induced NFATC1 and NFATC2 transactivation by participating in the regulation of reduced inositol 1,4,5-trisphosphate generation and intracellular calcium mobilization. After costimulation of T-cells through CD28 can phosphorylate CBLB and is required for the ubiquitination and subsequent degradation of CBLB, which is a prerequisite for the activation of TCR. During T-cells differentiation, plays an important role in the development of T-helper 2 (Th2) cells following immune and inflammatory responses, and, in the development of inflammatory autoimmune diseases, is necessary for the activation of IL17-producing Th17 cells. May play a minor role in Th1 response. Upon TCR stimulation, mediates T-cell protective survival signal by phosphorylating BAD, thus protecting T-cells from BAD-induced apoptosis, and by up-regulating BCL-X(L)/BCL2L1 levels through NF-kappa-B and JUN pathways. In platelets, regulates signal transduction downstream of the ITGA2B, CD36/GP4, F2R/PAR1 and F2RL3/PAR4 receptors, playing a positive role in 'outside-in' signaling and granule secretion signal transduction. May relay signals from the activated ITGA2B receptor by regulating the uncoupling of WASP and WIPF1, thereby permitting the regulation of actin filament nucleation and branching activity of the Arp2/3 complex. May mediate inhibitory effects of free fatty acids on insulin signaling by phosphorylating IRS1, which in turn blocks IRS1 tyrosine phosphorylation and downstream activation of the PI3K/AKT pathway. Phosphorylates MSN (moesin) in the presence of phosphatidylglycerol or phosphatidylinositol. Phosphorylates PDPK1 at 'Ser-504' and 'Ser-532' and negatively regulates its ability to phosphorylate PKB/AKT1. Phosphorylates CCDC88A/GIV and inhibits its guanine nucleotide exchange factor activity. Phosphorylates and activates LRRK1, which phosphorylates RAB proteins involved in intracellular trafficking. In Mus musculus (Mouse), this protein is Protein kinase C theta type (Prkcq).